A 200-amino-acid polypeptide reads, in one-letter code: Prolactin-2 (200 aa).

Residues 1 to 23 form the signal peptide; sequence MRQRRISGSNLMMVLCVVAMCRA. 2 disulfides stabilise this stretch: cysteine 64–cysteine 173 and cysteine 190–cysteine 200.

This sequence belongs to the somatotropin/prolactin family.

It localises to the secreted. This is Prolactin-2 (prl2) from Oreochromis mossambicus (Mozambique tilapia).